A 295-amino-acid polypeptide reads, in one-letter code: HTH-type transcriptional regulator TrpI (295 aa).

An HTH lysR-type domain is found at 6-63 (PSLNALRAFEAAARLHSISLAAEELHVTHGAVSRQVRLLEDDLGVALFGKDGRGVKLT). Residues 23-42 (ISLAAEELHVTHGAVSRQVR) constitute a DNA-binding region (H-T-H motif).

The protein belongs to the LysR transcriptional regulatory family. Homotetramer.

Its function is as follows. Activates the expression of the trpBA genes, which encode the two tryptophan synthase subunits, and represses initiation at its own promoter. Acts by binding to two adjacent sites in the intergenic region. In the absence of the inducer indoleglycerol phosphate (InGP), TrpI binds to site I. In the presence of InGP, TrpI binds to site I and site II. Binding to site II is site I dependent. InGP strongly stimulates binding to site II and is required for maximal activation of trpBA. The sequence is that of HTH-type transcriptional regulator TrpI from Pseudomonas aeruginosa (strain ATCC 15692 / DSM 22644 / CIP 104116 / JCM 14847 / LMG 12228 / 1C / PRS 101 / PAO1).